Reading from the N-terminus, the 275-residue chain is tRNA uridine(34) hydroxylase (275 aa).

A Rhodanese domain is found at 121–214 (SQPDVLVIDT…YLEKTYNKNG (94 aa)). Catalysis depends on C174, which acts as the Cysteine persulfide intermediate.

This sequence belongs to the TrhO family.

It catalyses the reaction uridine(34) in tRNA + AH2 + O2 = 5-hydroxyuridine(34) in tRNA + A + H2O. Catalyzes oxygen-dependent 5-hydroxyuridine (ho5U) modification at position 34 in tRNAs. The sequence is that of tRNA uridine(34) hydroxylase from Wolbachia pipientis wMel.